The following is a 130-amino-acid chain: Chorion class B protein PC10 (130 aa).

The left arm stretch occupies residues 1–22; it reads GAWNGRLGCGCGGIAPAAELAA. A central domain region spans residues 23-93; it reads SYGGGLGVAS…GNGALGITAE (71 aa). The segment at 94 to 130 is right arm (Gly-rich tandem repeats); the sequence is RGYGAGIGYEGLGLGYGAGIGYKGYGLGGCGCGCGRL.

It belongs to the chorion protein family.

Its function is as follows. This protein is one of many from the eggshell of the silk moth. The chain is Chorion class B protein PC10 from Antheraea polyphemus (Polyphemus moth).